The sequence spans 138 residues: Nucleoside diphosphate kinase (138 aa).

Positions 9, 57, 85, 91, 102, and 112 each coordinate ATP. Histidine 115 acts as the Pros-phosphohistidine intermediate in catalysis.

Belongs to the NDK family. Homotetramer. Mg(2+) serves as cofactor.

The protein resides in the cytoplasm. It catalyses the reaction a 2'-deoxyribonucleoside 5'-diphosphate + ATP = a 2'-deoxyribonucleoside 5'-triphosphate + ADP. The enzyme catalyses a ribonucleoside 5'-diphosphate + ATP = a ribonucleoside 5'-triphosphate + ADP. Its function is as follows. Major role in the synthesis of nucleoside triphosphates other than ATP. The ATP gamma phosphate is transferred to the NDP beta phosphate via a ping-pong mechanism, using a phosphorylated active-site intermediate. This is Nucleoside diphosphate kinase from Deinococcus deserti (strain DSM 17065 / CIP 109153 / LMG 22923 / VCD115).